Here is a 101-residue protein sequence, read N- to C-terminus: Small ribosomal subunit protein uS14 (101 aa).

This sequence belongs to the universal ribosomal protein uS14 family. In terms of assembly, part of the 30S ribosomal subunit. Contacts proteins S3 and S10.

In terms of biological role, binds 16S rRNA, required for the assembly of 30S particles and may also be responsible for determining the conformation of the 16S rRNA at the A site. This chain is Small ribosomal subunit protein uS14, found in Cupriavidus pinatubonensis (strain JMP 134 / LMG 1197) (Cupriavidus necator (strain JMP 134)).